Here is a 451-residue protein sequence, read N- to C-terminus: Plasmepsin III (451 aa).

Residues 1-37 (MNLTIKEEDFTNTFMKNEESFNTFRVTKVKRWNAKRL) are Cytoplasmic-facing. Residues 1 to 123 (MNLTIKEEDF…KGLTKKSYLG (123 aa)) constitute a propeptide that is removed on maturation. Residues 38-58 (FKILFVTVFIVLAGGFSYYIF) form a helical; Signal-anchor for type II membrane protein membrane-spanning segment. At 59 to 451 (ENFVFQKNRK…TVGFALAKNL (393 aa)) the chain is on the lumenal side. The Peptidase A1 domain maps to 139-446 (SFGEAKLGDN…DYDNHTVGFA (308 aa)). Cystine bridges form between Cys-170–Cys-175 and Cys-372–Cys-408.

This sequence belongs to the peptidase A1 family. Probable homodimer; in the zymogen form. Monomer; in the active form. Acidification disrupts homodimerization. Component of the hemozoin formation complex (HFC) composed of falcipains FP2A and/or FP2B, plasmepsins PMII, PMIII/HAP and PMIV, heme detoxifying protein HDP and falcilysin FLN. The HFC complex is involved in hemoglobin degradation and detoxification of heme in the food vacuole during the asexual blood stage. Post-translationally, proteolytically cleaved into the soluble active mature form by cysteine proteases in the digestive vacuole of trophozoites. Proteolysis requires an acidic environment. Transprocessing may serve as an alternate activation system.

The protein resides in the membrane. It is found in the vacuole lumen. The catalysed reaction is Hydrolysis of the bonds linking certain hydrophobic residues in hemoglobin or globin. Also cleaves small molecules substrates such as Ala-Leu-Glu-Arg-Thr-Phe-|-Phe(NO2)-Ser-Phe-Pro-Thr.. With respect to regulation, dimerization causes loss of catalytic activity. Inhibited by pepstatin A. Inhibited by Zn(2+). Its function is as follows. During the asexual blood stage, catalyzes the cleavage of denatured host hemoglobin (Hb) or globins. Digestion of host Hb is an essential step which provides the parasite with amino acids for protein synthesis, and regulates osmolarity. The sequence is that of Plasmepsin III from Plasmodium falciparum (isolate 3D7).